Consider the following 225-residue polypeptide: Ribonuclease 3 (225 aa).

An RNase III domain is found at 5–127; it reads IDKLERKLGY…IIGAIYLDSD (123 aa). Residue Glu-40 coordinates Mg(2+). Asp-44 is an active-site residue. Mg(2+)-binding residues include Asp-113 and Glu-116. Residue Glu-116 is part of the active site. The DRBM domain maps to 154-224; sequence DPKTRLQEFL…AETALEQLTN (71 aa). Residues 204–225 form a disordered region; that stretch reads GTSRRKAEQAAAETALEQLTNG. The segment covering 212 to 225 has biased composition (low complexity); sequence QAAAETALEQLTNG.

Belongs to the ribonuclease III family. In terms of assembly, homodimer. It depends on Mg(2+) as a cofactor.

The protein resides in the cytoplasm. The catalysed reaction is Endonucleolytic cleavage to 5'-phosphomonoester.. In terms of biological role, digests double-stranded RNA. Involved in the processing of primary rRNA transcript to yield the immediate precursors to the large and small rRNAs (23S and 16S). Processes some mRNAs, and tRNAs when they are encoded in the rRNA operon. Processes pre-crRNA and tracrRNA of type II CRISPR loci if present in the organism. This is Ribonuclease 3 from Vibrio parahaemolyticus serotype O3:K6 (strain RIMD 2210633).